A 437-amino-acid chain; its full sequence is MLANVTRSTSKAAPALASIAQTAQKRFLSVHEYCSMNLLHEYNVNAPKGIVAKTPEEAYQAAKKLNTEDLVIKAQVLAGGRGKGHFDSGLQGGVKLCYTPEQVKDYASKMLGHKLITKQTGAAGRDCNAVYVVERQYAAREYYFAILLDRATRGPVLVASSEGGVEIEEVAKTNPDAILTVPFSIKTGLTREVALDTAKKMGFTEKCVPQAADTFMKLYKIFIEKDATMVEINPMAENNRGEVVCMDAKFGFDDNASYKPKGIFALRDTTQEDPREVAGHAKWNLNYVGMEGNIGCLVNGAGLAMATMDIIKLNGGVPANFLDVGGSATAKQVKEAFKIISSDKAVSAILVNIFGGIMRCDIVAEGVIQAVKELGLDIPLVVRLQGTKVEEARELIKNSNLSLYAIDDLDKAAKKVVQLANVVGLAKENGIKIKIEN.

Residues 1 to 27 (MLANVTRSTSKAAPALASIAQTAQKRF) constitute a hydrogenosome transit peptide. The ATP-grasp domain occupies 36 to 278 (MNLLHEYNVN…TTQEDPREVA (243 aa)). Residues K73, 80–82 (GRG), and E141 each bind ATP. Mg(2+)-binding residues include N233 and D247. Substrate-binding positions include N299 and 356-358 (GIM).

It belongs to the succinate/malate CoA ligase beta subunit family. In terms of assembly, heterodimer of an alpha and a beta subunit. Mg(2+) serves as cofactor.

It localises to the hydrogenosome. It carries out the reaction succinate + ATP + CoA = succinyl-CoA + ADP + phosphate. It participates in carbohydrate metabolism; tricarboxylic acid cycle; succinate from succinyl-CoA (ligase route): step 1/1. In terms of biological role, succinyl-CoA synthetase functions in the citric acid cycle (TCA), coupling the hydrolysis of succinyl-CoA to the synthesis of ATP and thus represents the only step of substrate-level phosphorylation in the TCA. The beta subunit provides nucleotide specificity of the enzyme and binds the substrate succinate, while the binding sites for coenzyme A and phosphate are found in the alpha subunit. This is Succinate--CoA ligase [ADP-forming] subunit beta, hydrogenosomal from Neocallimastix frontalis (Rumen fungus).